Consider the following 142-residue polypeptide: Hdr-like menaquinol oxidoreductase cytochrome c subunit (142 aa).

Residues 1–6 are Cytoplasmic-facing; the sequence is MYNKKY. A helical membrane pass occupies residues 7–27; it reads VIPLILVFLIGFFTPYWYNAM. The Extracellular segment spans residues 28–142; the sequence is AGTLGHVPTL…GIEELSKYFS (115 aa). Residues Cys-93, Cys-96, His-97, Cys-104, Cys-107, His-108, Cys-117, Cys-120, and His-121 each contribute to the heme site.

In terms of assembly, consists of five subunits: an integral membrane subunit, a cytochrome b-like subunit, a cytochrome c subunit and two iron-sulfur subunits. Post-translationally, binds 3 heme groups per subunit.

It is found in the cell membrane. Has menaquinol-oxidizing activity. HmeA, HmeB and HmeE subunits may together catalyze electron transfer from menaquinol to cytochrome c. This Archaeoglobus fulgidus (strain ATCC 49558 / DSM 4304 / JCM 9628 / NBRC 100126 / VC-16) protein is Hdr-like menaquinol oxidoreductase cytochrome c subunit (hmeE).